A 529-amino-acid polypeptide reads, in one-letter code: Corneodesmosin (529 aa).

The N-terminal stretch at methionine 1 to alanine 32 is a signal peptide. 2 disordered regions span residues phenylalanine 38–glycine 248 and glycine 383–glycine 492. Composition is skewed to low complexity over residues glycine 58 to serine 83, glycine 90 to glycine 100, glycine 111 to alanine 175, proline 189 to proline 231, serine 392 to serine 408, and proline 426 to glycine 441. N-linked (GlcNAc...) asparagine glycosylation is present at asparagine 172. Residues glycine 449–leucine 467 are compositionally biased toward polar residues.

The protein localises to the secreted. Its function is as follows. Important for the epidermal barrier integrity. This Pan troglodytes (Chimpanzee) protein is Corneodesmosin (CDSN).